We begin with the raw amino-acid sequence, 524 residues long: MEKDQIQPRVLESVDTNSLSLLSSNTSSNMNSNTNNKLSIIASDISTGSVLSRPLTPPVVQDIENNSMLQWQFEKKEFIFDSNSTPSKQAKPLQRNSPYQGNSQSENQNQQLLNVRKRRSQLIGAKPKIPSKLYQSVSKLDLIDDKSFTSLPIAPPCNIETNEDDSGNNEYNNNKKRPRLNPVNELRVHNNKRNRYVSYGPSLDTKNYELTENTSQDIPPLVLVEDYIPYTQSKSTKKMVSISDLKSKLSKRRDNHIPLRVKNSYSEINKETNRNSFEPNSLTLIPHILRNTEENRDESNNPLDFIKEEIEISDISIPNSIENMVVNLVNIPSSNKSYDDLYLSELNVHSQLRKCVICEKALYEISSRLLNSGYYKEIVCEQCTVRYEEAAKIFENCEFESSMDESNLSSGTFSDLENSAEPFHLSTDVPKKINRHIEDNKIDLKKEISKKKDSFSKELIERLQLQLLENDKSIKHHFNKDAMGSKSMNWFLEARRKLKWKWRINGLLPHFLRNQNSDRLNFQP.

The span at 83 to 101 (NSTPSKQAKPLQRNSPYQG) shows a compositional bias: polar residues. Disordered stretches follow at residues 83–108 (NSTP…SENQ) and 155–179 (PPCN…KRPR).

The protein resides in the cytoplasm. This is an uncharacterized protein from Saccharomyces cerevisiae (strain ATCC 204508 / S288c) (Baker's yeast).